The primary structure comprises 758 residues: Spastin (758 aa).

Residues 1–103 (MVRTKNQSSS…SPRSGHHHSY (103 aa)) are disordered. Residues 1-121 (MVRTKNQSSS…KQNLYVVSFP (121 aa)) lie on the Cytoplasmic side of the membrane. Residues 1-210 (MVRTKNQSSS…RPIQPLEMAA (210 aa)) form a required for localization to punctate cytoplasmic foci region. Composition is skewed to low complexity over residues 8-28 (SSSS…SSGA), 43-58 (RSSS…AGGS), 66-76 (SSNRRSPGSSP), and 85-95 (TDDLTPTTCSP). Positions 122–142 (IIFLFNVLRSLIYQLFCIFRY) form an intramembrane region, helical. Topologically, residues 143–758 (LYGASTKVIY…WSQDYGDITI (616 aa)) are cytoplasmic. Composition is skewed to polar residues over residues 169–180 (SKEQQQSLNHPS) and 189–198 (QEQQLSNQPQ). A disordered region spans residues 169–202 (SKEQQQSLNHPSELNREGDGQEQQLSNQPQRFRP). Positions 208–758 (MAANRPGGGY…WSQDYGDITI (551 aa)) are sufficient for interaction with microtubules and microtubule severing. Residues 233–308 (HRRAFEYISK…SMARDRLHFL (76 aa)) enclose the MIT domain. Residues 323 to 339 (KEKQKEEARSKPQKSRE) show a composition bias toward basic and acidic residues. The disordered stretch occupies residues 323-454 (KEKQKEEARS…GPSGSGASTP (132 aa)). 2 stretches are compositionally biased toward polar residues: residues 390 to 406 (NKSQ…TSVG) and 425 to 454 (QFSS…ASTP). The interval 443-455 (NNGPSGSGASTPV) is required for interaction with microtubules. 523–530 (GPPGNGKT) is an ATP binding site.

It belongs to the AAA ATPase family. Spastin subfamily. Homohexamer. The homohexamer is stabilized by ATP-binding. The homohexamer may adopt a ring conformation through which microtubules pass prior to being severed. Interacts with microtubules. Interacts with atl; may be involved in microtubule dynamics.

It is found in the membrane. Its subcellular location is the cytoplasm. The protein resides in the cytoskeleton. The protein localises to the microtubule organizing center. It localises to the centrosome. It is found in the chromosome. Its subcellular location is the lipid droplet. It carries out the reaction n ATP + n H2O + a microtubule = n ADP + n phosphate + (n+1) alpha/beta tubulin heterodimers.. In terms of biological role, ATP-dependent microtubule severing protein. Stimulates microtubule minus-end depolymerization and poleward microtubule flux in the mitotic spindle. Regulates microtubule stability in the neuromuscular junction synapse. Involved in lipid metabolism by regulating the size and distribution of lipid droplets. Involved in axon regeneration by regulating microtubule severing. The polypeptide is Spastin (Drosophila simulans (Fruit fly)).